A 167-amino-acid polypeptide reads, in one-letter code: Early nodulin-like protein 16 (167 aa).

A signal peptide spans 1 to 24 (MARVAVLVAGAVLAFLLAATNVTA). One can recognise a Phytocyanin domain in the interval 25–126 (KRWTVGDNKF…GMKLAVLVEK (102 aa)). N-linked (GlcNAc...) asparagine glycans are attached at residues N40, N71, N86, and N99. C78 and C114 are joined by a disulfide. The GPI-anchor amidated asparagine moiety is linked to residue N138. Positions 139 to 167 (SARRTFSVSGFAYQFLIPVAVFAAVGTRY) are cleaved as a propeptide — removed in mature form.

Belongs to the early nodulin-like (ENODL) family.

The protein resides in the cell membrane. Functionally, may act as a carbohydrate transporter. The protein is Early nodulin-like protein 16 of Arabidopsis thaliana (Mouse-ear cress).